Here is a 477-residue protein sequence, read N- to C-terminus: Cysteine--tRNA ligase (477 aa).

A Zn(2+)-binding site is contributed by C29. The short motif at 31-41 is the 'HIGH' region element; it reads PTVYNYFHVGN. C209, H234, and E238 together coordinate Zn(2+). A 'KMSKS' region motif is present at residues 267-271; that stretch reads KMSKS. K270 contributes to the ATP binding site.

It belongs to the class-I aminoacyl-tRNA synthetase family. In terms of assembly, monomer. It depends on Zn(2+) as a cofactor.

Its subcellular location is the cytoplasm. The catalysed reaction is tRNA(Cys) + L-cysteine + ATP = L-cysteinyl-tRNA(Cys) + AMP + diphosphate. The chain is Cysteine--tRNA ligase from Desulfitobacterium hafniense (strain DSM 10664 / DCB-2).